A 925-amino-acid polypeptide reads, in one-letter code: Ubp5-interacting protein ftp105 (925 aa).

The span at 650 to 664 shows a compositional bias: low complexity; sequence EGSSDFESKSSDNTS. The segment at 650 to 671 is disordered; that stretch reads EGSSDFESKSSDNTSLDGTPLQ.

The protein belongs to the hid-1 family. As to quaternary structure, interacts with ubp5.

It is found in the cytoplasm. The protein localises to the golgi apparatus. In terms of biological role, required for the localization of ubp5 to the Golgi apparatus. Involved in detoxification of cadmium ion. The protein is Ubp5-interacting protein ftp105 (ftp105) of Schizosaccharomyces pombe (strain 972 / ATCC 24843) (Fission yeast).